We begin with the raw amino-acid sequence, 90 residues long: uncharacterized protein (90 aa).

The helical transmembrane segment at 12-32 threads the bilayer; that stretch reads VVGGLSFWSFSAGVIMIVNAF.

Its subcellular location is the membrane. This is an uncharacterized protein from Mycoplasma pneumoniae (strain ATCC 29342 / M129 / Subtype 1) (Mycoplasmoides pneumoniae).